Reading from the N-terminus, the 273-residue chain is NH(3)-dependent NAD(+) synthetase (273 aa).

Position 47-54 (Gly-47–Ser-54) interacts with ATP. Asp-53 contacts Mg(2+). Arg-139 is a binding site for deamido-NAD(+). Residue Thr-159 participates in ATP binding. Glu-164 contributes to the Mg(2+) binding site. The deamido-NAD(+) site is built by Lys-172 and Asp-179. ATP-binding residues include Lys-188 and Thr-210. His-259–Lys-260 serves as a coordination point for deamido-NAD(+).

This sequence belongs to the NAD synthetase family. Homodimer.

It catalyses the reaction deamido-NAD(+) + NH4(+) + ATP = AMP + diphosphate + NAD(+) + H(+). It participates in cofactor biosynthesis; NAD(+) biosynthesis; NAD(+) from deamido-NAD(+) (ammonia route): step 1/1. In terms of biological role, catalyzes the ATP-dependent amidation of deamido-NAD to form NAD. Uses ammonia as a nitrogen source. The protein is NH(3)-dependent NAD(+) synthetase of Staphylococcus aureus (strain COL).